Consider the following 48-residue polypeptide: Palustrin-3a (48 aa).

An intrachain disulfide couples cysteine 43 to cysteine 48.

As to expression, expressed by the skin glands.

It localises to the secreted. Functionally, antimicrobial activity against Gram-negative bacterium E.coli. The polypeptide is Palustrin-3a (Lithobates palustris (Pickerel frog)).